The chain runs to 351 residues: Flagellar P-ring protein (351 aa).

The N-terminal stretch at 1–20 (MKKILFLFTASLLLHVTLQA) is a signal peptide.

This sequence belongs to the FlgI family. The basal body constitutes a major portion of the flagellar organelle and consists of four rings (L,P,S, and M) mounted on a central rod.

The protein resides in the periplasm. The protein localises to the bacterial flagellum basal body. Assembles around the rod to form the L-ring and probably protects the motor/basal body from shearing forces during rotation. In Sulfurimonas denitrificans (strain ATCC 33889 / DSM 1251) (Thiomicrospira denitrificans (strain ATCC 33889 / DSM 1251)), this protein is Flagellar P-ring protein.